Consider the following 65-residue polypeptide: MCYYSNYYGGLRYGYGVLGGGYGCGCGYGHGYGGLGCGYGRGYGGYGYGCCRPSCYGRYWSCGFY.

This sequence belongs to the KRTAP type 20 family. In terms of assembly, interacts with hair keratins.

Its function is as follows. In the hair cortex, hair keratin intermediate filaments are embedded in an interfilamentous matrix, consisting of hair keratin-associated proteins (KRTAP), which are essential for the formation of a rigid and resistant hair shaft through their extensive disulfide bond cross-linking with abundant cysteine residues of hair keratins. The matrix proteins include the high-sulfur and high-glycine-tyrosine keratins. The chain is Keratin-associated protein 20-2 (KRTAP20-2) from Homo sapiens (Human).